The chain runs to 96 residues: Putative pterin-4-alpha-carbinolamine dehydratase (96 aa).

It belongs to the pterin-4-alpha-carbinolamine dehydratase family.

It carries out the reaction (4aS,6R)-4a-hydroxy-L-erythro-5,6,7,8-tetrahydrobiopterin = (6R)-L-erythro-6,7-dihydrobiopterin + H2O. The sequence is that of Putative pterin-4-alpha-carbinolamine dehydratase from Rhodospirillum rubrum (strain ATCC 11170 / ATH 1.1.1 / DSM 467 / LMG 4362 / NCIMB 8255 / S1).